The following is an 875-amino-acid chain: Protein translocase subunit SecA (875 aa).

ATP contacts are provided by residues Gln-87, 105-109 (GEGKT), and Asp-512. Residues Cys-860, Cys-862, Cys-871, and His-872 each coordinate Zn(2+).

The protein belongs to the SecA family. Monomer and homodimer. Part of the essential Sec protein translocation apparatus which comprises SecA, SecYEG and auxiliary proteins SecDF-YajC and YidC. The cofactor is Zn(2+).

Its subcellular location is the cell inner membrane. The protein localises to the cytoplasm. The enzyme catalyses ATP + H2O + cellular proteinSide 1 = ADP + phosphate + cellular proteinSide 2.. In terms of biological role, part of the Sec protein translocase complex. Interacts with the SecYEG preprotein conducting channel. Has a central role in coupling the hydrolysis of ATP to the transfer of proteins into and across the cell membrane, serving both as a receptor for the preprotein-SecB complex and as an ATP-driven molecular motor driving the stepwise translocation of polypeptide chains across the membrane. The protein is Protein translocase subunit SecA of Buchnera aphidicola subsp. Acyrthosiphon pisum (strain APS) (Acyrthosiphon pisum symbiotic bacterium).